Consider the following 186-residue polypeptide: Ribosome-recycling factor (186 aa).

The protein belongs to the RRF family.

It localises to the cytoplasm. Functionally, responsible for the release of ribosomes from messenger RNA at the termination of protein biosynthesis. May increase the efficiency of translation by recycling ribosomes from one round of translation to another. This chain is Ribosome-recycling factor, found in Pediococcus pentosaceus (strain ATCC 25745 / CCUG 21536 / LMG 10740 / 183-1w).